A 312-amino-acid polypeptide reads, in one-letter code: Olfactory receptor 1500 (312 aa).

The Extracellular segment spans residues 1–25 (MTGNNQTLILEFLLLGLPIPSEYHL). Asparagine 5 carries an N-linked (GlcNAc...) asparagine glycan. A helical membrane pass occupies residues 26 to 49 (LFYALFLAMYLTIILGNLLIIVLV). Over 50–57 (RLDSHLHM) the chain is Cytoplasmic. Residues 58 to 79 (PMYLFLSNLSFSDLCFSSVTMP) traverse the membrane as a helical segment. Residues 80-100 (KLLQNMQSQVPSISYTGCLTQ) lie on the Extracellular side of the membrane. A disulfide bridge connects residues cysteine 97 and cysteine 189. A helical transmembrane segment spans residues 101 to 120 (LYFFMVFGDMESFLLVVMAY). Over 121 to 139 (DRYVAICFPLRYTTIMSTK) the chain is Cytoplasmic. The chain crosses the membrane as a helical span at residues 140 to 158 (FCASLVLLLWMLTMTHALL). Over 159–196 (HTLLIARLSFCEKNVILHFFCDISALLKLSCSDIYVNE) the chain is Extracellular. A helical transmembrane segment spans residues 197 to 219 (LMIYILGGLIIIIPFLLIVMSYV). Topologically, residues 220 to 236 (RIFFSILKFPSIQDIYK) are cytoplasmic. The helical transmembrane segment at 237–260 (VFSTCGSHLSVVTLFYGTIFGIYL) threads the bilayer. Residues 261 to 272 (CPSGNNSTVKEI) lie on the Extracellular side of the membrane. A helical transmembrane segment spans residues 273 to 292 (AMAMMYTVVTPMLNPFIYSL). Residues 293-312 (RNRDMKRALIRVICTKKISL) lie on the Cytoplasmic side of the membrane.

This sequence belongs to the G-protein coupled receptor 1 family. In terms of tissue distribution, olfactory epithelium.

It is found in the cell membrane. Functionally, odorant receptor. The chain is Olfactory receptor 1500 (Olr1500) from Rattus norvegicus (Rat).